An 86-amino-acid polypeptide reads, in one-letter code: Small ribosomal subunit protein uS15 (86 aa).

This sequence belongs to the universal ribosomal protein uS15 family. Part of the 30S ribosomal subunit. Forms a bridge to the 50S subunit in the 70S ribosome, contacting the 23S rRNA.

Functionally, one of the primary rRNA binding proteins, it binds directly to 16S rRNA where it helps nucleate assembly of the platform of the 30S subunit by binding and bridging several RNA helices of the 16S rRNA. In terms of biological role, forms an intersubunit bridge (bridge B4) with the 23S rRNA of the 50S subunit in the ribosome. This is Small ribosomal subunit protein uS15 from Endomicrobium trichonymphae.